Consider the following 205-residue polypeptide: Methylthioribulose-1-phosphate dehydratase (205 aa).

Residues His96 and His98 each coordinate Zn(2+).

The protein belongs to the aldolase class II family. MtnB subfamily. Zn(2+) is required as a cofactor.

It catalyses the reaction 5-(methylsulfanyl)-D-ribulose 1-phosphate = 5-methylsulfanyl-2,3-dioxopentyl phosphate + H2O. Its pathway is amino-acid biosynthesis; L-methionine biosynthesis via salvage pathway; L-methionine from S-methyl-5-thio-alpha-D-ribose 1-phosphate: step 2/6. Its function is as follows. Catalyzes the dehydration of methylthioribulose-1-phosphate (MTRu-1-P) into 2,3-diketo-5-methylthiopentyl-1-phosphate (DK-MTP-1-P). The sequence is that of Methylthioribulose-1-phosphate dehydratase from Pseudomonas paraeruginosa (strain DSM 24068 / PA7) (Pseudomonas aeruginosa (strain PA7)).